Consider the following 503-residue polypeptide: Cysteine desulfurase, mitochondrial (503 aa).

The N-terminal 27 residues, 1-27 (MSNIAPQVLRHASRACSRRLSLSASLV), are a transit peptide targeting the mitochondrion. Over residues 34–50 (RTVTGSGSGGRRYVSGS) the composition is skewed to low complexity. The tract at residues 34–58 (RTVTGSGSGGRRYVSGSQRHNAQAQ) is disordered. Residues 172-173 (AT), Asn-254, Gln-282, and 302-304 (SGH) each bind pyridoxal 5'-phosphate. N6-(pyridoxal phosphate)lysine is present on Lys-305. Residue Thr-342 participates in pyridoxal 5'-phosphate binding. Catalysis depends on Cys-427, which acts as the Cysteine persulfide intermediate. Cys-427 is a binding site for [2Fe-2S] cluster.

The protein belongs to the class-V pyridoxal-phosphate-dependent aminotransferase family. NifS/IscS subfamily. Pyridoxal 5'-phosphate is required as a cofactor.

It is found in the mitochondrion. It catalyses the reaction (sulfur carrier)-H + L-cysteine = (sulfur carrier)-SH + L-alanine. Catalyzes the removal of elemental sulfur from cysteine to produce alanine. It supplies the inorganic sulfur for iron-sulfur (Fe-S) clusters. Plays a role in both tRNA-processing and mitochondrial metabolism. Involved in the 2-thio-modification of both 5-carboxymethylaminomethyl-2-thiouridine in mitochondrial tRNAs and 5-methoxycarbonylmethyl-2-thiouridine (mcm5s2U) in cytoplasmic tRNAs. This is Cysteine desulfurase, mitochondrial from Arthroderma benhamiae (strain ATCC MYA-4681 / CBS 112371) (Trichophyton mentagrophytes).